We begin with the raw amino-acid sequence, 545 residues long: Calcium-dependent protein kinase 6 (545 aa).

Residue G2 is the site of N-myristoyl glycine attachment. Residues 34-43 (CSSTSTATSS) show a composition bias toward low complexity. A disordered region spans residues 34-58 (CSSTSTATSSGGRMPIRSHQQRLSS). The Protein kinase domain occupies 74-332 (YTVGRKLGQG…AHQVLCHPWV (259 aa)). ATP-binding positions include 80 to 88 (LGQGQFGTT) and K103. Residue D198 is the Proton acceptor of the active site. Positions 338-368 (APDRPLAPAVLSRLKQFSAMNRLKKMALRVI) are autoinhibitory domain. EF-hand domains lie at 375–410 (EELA…YGSN), 411–446 (LREA…LNKL), 447–482 (EREE…HNMA), and 486–516 (IDDI…GAID). 19 residues coordinate Ca(2+): D388, D390, S392, E399, D424, D426, S428, T430, E435, D460, D462, S464, Y466, E471, D494, D496, D498, R500, and E505. The segment at 526-545 (GRPTTATSDDPSPTISSSSR) is disordered. A compositionally biased stretch (low complexity) spans 528–545 (PTTATSDDPSPTISSSSR).

This sequence belongs to the protein kinase superfamily. Ser/Thr protein kinase family. CDPK subfamily.

It is found in the membrane. It carries out the reaction L-seryl-[protein] + ATP = O-phospho-L-seryl-[protein] + ADP + H(+). The catalysed reaction is L-threonyl-[protein] + ATP = O-phospho-L-threonyl-[protein] + ADP + H(+). Its activity is regulated as follows. Activated by calcium. Autophosphorylation may play an important role in the regulation of the kinase activity. Functionally, may play a role in signal transduction pathways that involve calcium as a second messenger. This Oryza sativa subsp. japonica (Rice) protein is Calcium-dependent protein kinase 6.